Reading from the N-terminus, the 289-residue chain is Protease HtpX homolog (289 aa).

2 helical membrane-spanning segments follow: residues 8–28 (LALL…VIGG) and 29–49 (SSGL…SWYQ). Histidine 132 is a binding site for Zn(2+). The active site involves glutamate 133. Histidine 136 serves as a coordination point for Zn(2+). 2 helical membrane-spanning segments follow: residues 151-171 (VAGA…FGGI) and 183-203 (LGVL…QLAI). Glutamate 208 contacts Zn(2+).

The protein belongs to the peptidase M48B family. Zn(2+) serves as cofactor.

The protein localises to the cell inner membrane. The polypeptide is Protease HtpX homolog (Nostoc sp. (strain PCC 7120 / SAG 25.82 / UTEX 2576)).